Here is a 317-residue protein sequence, read N- to C-terminus: Methionyl-tRNA formyltransferase (317 aa).

110 to 113 is a binding site for (6S)-5,6,7,8-tetrahydrofolate; it reads SLLP.

It belongs to the Fmt family.

The catalysed reaction is L-methionyl-tRNA(fMet) + (6R)-10-formyltetrahydrofolate = N-formyl-L-methionyl-tRNA(fMet) + (6S)-5,6,7,8-tetrahydrofolate + H(+). Functionally, attaches a formyl group to the free amino group of methionyl-tRNA(fMet). The formyl group appears to play a dual role in the initiator identity of N-formylmethionyl-tRNA by promoting its recognition by IF2 and preventing the misappropriation of this tRNA by the elongation apparatus. In Lactiplantibacillus plantarum (strain ATCC BAA-793 / NCIMB 8826 / WCFS1) (Lactobacillus plantarum), this protein is Methionyl-tRNA formyltransferase.